The following is a 154-amino-acid chain: Ascorbate-specific PTS system EIIA component (154 aa).

Residues 6 to 150 (SLAENNSIRL…QEVLDLIDRT (145 aa)) enclose the PTS EIIA type-2 domain. The Tele-phosphohistidine intermediate role is filled by histidine 68. Histidine 68 carries the phosphohistidine modification.

The protein resides in the cytoplasm. Functionally, the phosphoenolpyruvate-dependent sugar phosphotransferase system (sugar PTS), a major carbohydrate active transport system, catalyzes the phosphorylation of incoming sugar substrates concomitantly with their translocation across the cell membrane. The enzyme II UlaABC PTS system is involved in ascorbate transport. The polypeptide is Ascorbate-specific PTS system EIIA component (ulaC) (Salmonella choleraesuis (strain SC-B67)).